The sequence spans 1011 residues: Probable beta-galactosidase E (1011 aa).

Residues 1 to 19 form the signal peptide; the sequence is MKSLLKRLIALAAAYSVAA. The substrate site is built by Tyr-92, Asn-136, Ala-137, Glu-138, and Asn-195. Glu-196 functions as the Proton donor in the catalytic mechanism. An N-linked (GlcNAc...) asparagine glycan is attached at Asn-202. Tyr-261 is a substrate binding site. An intrachain disulfide couples Cys-267 to Cys-316. Catalysis depends on Glu-299, which acts as the Nucleophile. Residue Tyr-365 coordinates substrate. Residues Asn-406, Asn-423, Asn-446, Asn-455, Asn-588, Asn-622, Asn-704, Asn-745, Asn-759, Asn-772, Asn-778, and Asn-913 are each glycosylated (N-linked (GlcNAc...) asparagine).

Belongs to the glycosyl hydrolase 35 family.

The protein resides in the secreted. The enzyme catalyses Hydrolysis of terminal non-reducing beta-D-galactose residues in beta-D-galactosides.. Its function is as follows. Cleaves beta-linked terminal galactosyl residues from gangliosides, glycoproteins, and glycosaminoglycans. The sequence is that of Probable beta-galactosidase E (lacE) from Aspergillus fumigatus (strain CBS 144.89 / FGSC A1163 / CEA10) (Neosartorya fumigata).